The chain runs to 124 residues: Histone H2B, embryonic (124 aa).

Residues 1–31 (MAPTAQVAKKGSKKAVKGTKTAXGGKKRNRK) form a disordered region. An O-linked (GlcNAc) serine glycan is attached at S111. K119 participates in a covalent cross-link: Glycyl lysine isopeptide (Lys-Gly) (interchain with G-Cter in ubiquitin).

Belongs to the histone H2B family. In terms of assembly, the nucleosome is a histone octamer containing two molecules each of H2A, H2B, H3 and H4 assembled in one H3-H4 heterotetramer and two H2A-H2B heterodimers. The octamer wraps approximately 147 bp of DNA. Monoubiquitination of Lys-119 gives a specific tag for epigenetic transcriptional activation and is also prerequisite for histone H3 'Lys-4' and 'Lys-79' methylation. In terms of processing, glcNAcylation at Ser-111 promotes monoubiquitination of Lys-119. It fluctuates in response to extracellular glucose, and associates with transcribed genes.

The protein localises to the nucleus. The protein resides in the chromosome. In terms of biological role, core component of nucleosome. Nucleosomes wrap and compact DNA into chromatin, limiting DNA accessibility to the cellular machineries which require DNA as a template. Histones thereby play a central role in transcription regulation, DNA repair, DNA replication and chromosomal stability. DNA accessibility is regulated via a complex set of post-translational modifications of histones, also called histone code, and nucleosome remodeling. This Strongylocentrotus purpuratus (Purple sea urchin) protein is Histone H2B, embryonic.